We begin with the raw amino-acid sequence, 576 residues long: Eukaryotic translation initiation factor 2A (576 aa).

WD repeat units follow at residues 71-119 (LPAA…LVFS), 266-307 (DREG…VSII), 308-349 (PPAP…KKIT), and 351-396 (VEAA…MFYE). Disordered regions lie at residues 422–461 (SASLPSPPTPHASASKLAAKPSVKPAGAYRPPGARGQNST) and 475–505 (GSANKHVNSSRQRVVPGATPVIDGNKKNNKK). Positions 475–486 (GSANKHVNSSRQ) are enriched in polar residues.

It belongs to the WD repeat EIF2A family.

The protein localises to the cytoplasm. Its function is as follows. Functions in the early steps of protein synthesis of a small number of specific mRNAs. Acts by directing the binding of methionyl-tRNAi to 40S ribosomal subunits. In contrast to the eIF-2 complex, it binds methionyl-tRNAi to 40S subunits in a codon-dependent manner, whereas the eIF-2 complex binds methionyl-tRNAi to 40S subunits in a GTP-dependent manner. The protein is Eukaryotic translation initiation factor 2A of Schizosaccharomyces pombe (strain 972 / ATCC 24843) (Fission yeast).